The sequence spans 781 residues: Lon protease (781 aa).

The Lon N-terminal domain maps to 16 to 214 (ANVLVTRGIV…KILSFTIDER (199 aa)). 365-372 (GPPGVGKT) is a binding site for ATP. The region spanning 601–781 (EYMPGVVNGM…YDDVYNRLFK (181 aa)) is the Lon proteolytic domain. Catalysis depends on residues S688 and K731.

It belongs to the peptidase S16 family. As to quaternary structure, homohexamer. Organized in a ring with a central cavity.

It is found in the cytoplasm. The catalysed reaction is Hydrolysis of proteins in presence of ATP.. Functionally, ATP-dependent serine protease that mediates the selective degradation of mutant and abnormal proteins as well as certain short-lived regulatory proteins. Required for cellular homeostasis and for survival from DNA damage and developmental changes induced by stress. Degrades polypeptides processively to yield small peptide fragments that are 5 to 10 amino acids long. Binds to DNA in a double-stranded, site-specific manner. The protein is Lon protease of Malacoplasma penetrans (strain HF-2) (Mycoplasma penetrans).